The following is a 207-amino-acid chain: Guanylate kinase (207 aa).

The region spanning 3–181 (GLLFVVSAAS…ALHDLESVIT (179 aa)) is the Guanylate kinase-like domain. Residue 10-17 (AASGTGKT) participates in ATP binding.

The protein belongs to the guanylate kinase family.

It localises to the cytoplasm. It carries out the reaction GMP + ATP = GDP + ADP. Its function is as follows. Essential for recycling GMP and indirectly, cGMP. This Acinetobacter baylyi (strain ATCC 33305 / BD413 / ADP1) protein is Guanylate kinase.